A 106-amino-acid chain; its full sequence is Transcription initiation factor IIA subunit 2 (106 aa).

The protein belongs to the TFIIA subunit 2 family. As to quaternary structure, TFIIA is a heterodimer of the large unprocessed subunit 1 and a small subunit gamma. It was originally believed to be a heterotrimer of an alpha, a beta and a gamma subunit.

It is found in the nucleus. In terms of biological role, TFIIA is a component of the transcription machinery of RNA polymerase II and plays an important role in transcriptional activation. TFIIA in a complex with TBP mediates transcriptional activity. Protein involved in the resistance to X.oryzae. The polypeptide is Transcription initiation factor IIA subunit 2 (TFIIAy) (Oryza sativa subsp. indica (Rice)).